The primary structure comprises 346 residues: Cell division protein ZipA (346 aa).

Over M1–L6 the chain is Periplasmic. The helical transmembrane segment at V7 to I27 threads the bilayer. Residues R28–A346 are Cytoplasmic-facing. Disordered regions lie at residues A76 to E103 and Q121 to P145.

This sequence belongs to the ZipA family. In terms of assembly, interacts with FtsZ via their C-terminal domains.

It is found in the cell inner membrane. Functionally, essential cell division protein that stabilizes the FtsZ protofilaments by cross-linking them and that serves as a cytoplasmic membrane anchor for the Z ring. Also required for the recruitment to the septal ring of downstream cell division proteins. The polypeptide is Cell division protein ZipA (Shewanella sp. (strain MR-7)).